A 410-amino-acid chain; its full sequence is MSKEKIVLAYSGGLDTSVAIAWLKNKGYDVIACCIDVGEGKDLEAIKEKGLQVGAWKSVVIDAKRDFAEQFVLPALQAHAMYEQKYPLVSALSRPLIVQKLVAVANQYGATAIAHGCTGKGNDQVRFEAGIHALAPEMKIEDPIRDWHWSREEEIQYAKDNGIPVPITKASPYSIDENLWGRANECGILEDPWAAAPADAYDRTVSIEEAPDTPTTIEITFNEGVPTAIDGEEMPLDQLIMKLDKLAGSHGIGRIDHVENRLVGIKSREIYECPAATVLLAAHKDLEDLTQEREVAHFKPLIEQKMSGIIYNGLWYSPLMKSLVAFIDESQAVVNGVVRVKLFKGNVICEGRKSPNSLYDKNLATYTSADEFDQEAATGFIKLWELPDKVYAQVQNKNKKKVKENTSDAY.

9-17 (AYSGGLDTS) is a binding site for ATP. Y86 is an L-citrulline binding site. G116 is a binding site for ATP. Residues T118, N122, and D123 each contribute to the L-aspartate site. Residue N122 coordinates L-citrulline. L-citrulline contacts are provided by R126, S174, E259, and Y271.

The protein belongs to the argininosuccinate synthase family. Type 1 subfamily. As to quaternary structure, homotetramer.

Its subcellular location is the cytoplasm. It carries out the reaction L-citrulline + L-aspartate + ATP = 2-(N(omega)-L-arginino)succinate + AMP + diphosphate + H(+). It functions in the pathway amino-acid biosynthesis; L-arginine biosynthesis; L-arginine from L-ornithine and carbamoyl phosphate: step 2/3. This is Argininosuccinate synthase from Limosilactobacillus reuteri (strain DSM 20016) (Lactobacillus reuteri).